The chain runs to 339 residues: Holliday junction branch migration complex subunit RuvB (339 aa).

Residues 1–187 are large ATPase domain (RuvB-L); the sequence is MQGFEDENRI…FGVICKLDYY (187 aa). ATP is bound by residues Leu26, Arg27, Gly68, Lys71, Thr72, Thr73, 134-136, Arg177, Tyr187, and Arg224; that span reads EDF. Residue Thr72 participates in Mg(2+) binding. Residues 188-258 form a small ATPAse domain (RuvB-S) region; it reads TVDELSKIVL…VAKDALELLG (71 aa). Residues 261–339 form a head domain (RuvB-H) region; that stretch reads SLGLDFVDEK…HLKIPYPNEK (79 aa). Residues Arg297, Arg316, and Arg321 each coordinate DNA.

The protein belongs to the RuvB family. As to quaternary structure, homohexamer. Forms an RuvA(8)-RuvB(12)-Holliday junction (HJ) complex. HJ DNA is sandwiched between 2 RuvA tetramers; dsDNA enters through RuvA and exits via RuvB. An RuvB hexamer assembles on each DNA strand where it exits the tetramer. Each RuvB hexamer is contacted by two RuvA subunits (via domain III) on 2 adjacent RuvB subunits; this complex drives branch migration. In the full resolvosome a probable DNA-RuvA(4)-RuvB(12)-RuvC(2) complex forms which resolves the HJ.

Its subcellular location is the cytoplasm. It catalyses the reaction ATP + H2O = ADP + phosphate + H(+). The RuvA-RuvB-RuvC complex processes Holliday junction (HJ) DNA during genetic recombination and DNA repair, while the RuvA-RuvB complex plays an important role in the rescue of blocked DNA replication forks via replication fork reversal (RFR). RuvA specifically binds to HJ cruciform DNA, conferring on it an open structure. The RuvB hexamer acts as an ATP-dependent pump, pulling dsDNA into and through the RuvAB complex. RuvB forms 2 homohexamers on either side of HJ DNA bound by 1 or 2 RuvA tetramers; 4 subunits per hexamer contact DNA at a time. Coordinated motions by a converter formed by DNA-disengaged RuvB subunits stimulates ATP hydrolysis and nucleotide exchange. Immobilization of the converter enables RuvB to convert the ATP-contained energy into a lever motion, pulling 2 nucleotides of DNA out of the RuvA tetramer per ATP hydrolyzed, thus driving DNA branch migration. The RuvB motors rotate together with the DNA substrate, which together with the progressing nucleotide cycle form the mechanistic basis for DNA recombination by continuous HJ branch migration. Branch migration allows RuvC to scan DNA until it finds its consensus sequence, where it cleaves and resolves cruciform DNA. The protein is Holliday junction branch migration complex subunit RuvB of Clostridioides difficile (strain 630) (Peptoclostridium difficile).